Reading from the N-terminus, the 433-residue chain is MSLAPSDVIFAPASGVGGAISLLRLSGAGVARVIGALAGSLPAPRRASLRSFRDGRRGIIDRGLLLWFPGPASVTGEDYAEFHLHGGRAVRAAITAALLDLGARPAEPGEFSRRAFLNSRLDLLEAEGIADLIDAETEAQRQLALDLAGGAMSRAVAAWREALIGLMAQLAALIDFADEDLPAEVEAAMLASMARLRDEIVAAIGAGLAAERLREGVEIVVLGAPNAGKSTLVNALAGEEVAIVSDIPGTTRDAIGVRLDLGGVPVRLVDTAGLRRSDDAIEAEGVRRAEAHARRADLLILCGAAPDFVVPDAPADVPALRIATKADLGGAVPAAMLAVSARTGAGLADLLAALRARVEALVERGAGPALPRPRQIACLRDVAAALDRALAIDVPELRAEEMQAAAVALARLTGTIGVEDVLDQVFSSFCIGK.

Residues R24, E81, and R120 each coordinate (6S)-5-formyl-5,6,7,8-tetrahydrofolate. Positions G216–E359 constitute a TrmE-type G domain. Residue N226 coordinates K(+). GTP-binding positions include N226–T231, S245–T251, D270–G273, and S340–R342. S230 contacts Mg(2+). S245, I247, and T250 together coordinate K(+). Position 251 (T251) interacts with Mg(2+). K433 contributes to the (6S)-5-formyl-5,6,7,8-tetrahydrofolate binding site.

The protein belongs to the TRAFAC class TrmE-Era-EngA-EngB-Septin-like GTPase superfamily. TrmE GTPase family. Homodimer. Heterotetramer of two MnmE and two MnmG subunits. It depends on K(+) as a cofactor.

The protein localises to the cytoplasm. Exhibits a very high intrinsic GTPase hydrolysis rate. Involved in the addition of a carboxymethylaminomethyl (cmnm) group at the wobble position (U34) of certain tRNAs, forming tRNA-cmnm(5)s(2)U34. This chain is tRNA modification GTPase MnmE, found in Acidiphilium cryptum (strain JF-5).